The following is a 357-amino-acid chain: Solute carrier family 25 member 3 (357 aa).

The transit peptide at 1-45 (MFSSVAHLARANPFNAPHLQLVHDGLSGPRSPPAPPRRSRHLAAA) directs the protein to the mitochondrion. Residues 46–58 (AVEEYSCEFGSMK) lie on the Mitochondrial intermembrane side of the membrane. 3 Solcar repeats span residues 58–142 (KYYA…FKAL), 155–239 (WRTS…TVEA), and 256–334 (EQLV…VKVY). Residues 59 to 81 (YYALCGFGGVLSCGLTHTAVVPL) traverse the membrane as a helical segment. The Mitochondrial matrix segment spans residues 82–116 (DLVKCRMQVDPQKYKGIFNGFSITLKEDGVRGLAK). Position 94 is an N6-acetyllysine (lysine 94). The residue at position 107 (lysine 107) is an N6-methyllysine. The helical transmembrane segment at 117–136 (GWAPTLIGYSMQGLCKFGFY) threads the bilayer. Residues 137-156 (EVFKALYSNILGEENTYLWR) are Mitochondrial intermembrane-facing. The helical transmembrane segment at 157–178 (TSLYLASSASAEFFADIALAPM) threads the bilayer. Residues 179 to 213 (EAAKVRIQTQPGYANTLREAVPKMYKEEGLNAFYK) lie on the Mitochondrial matrix side of the membrane. Tyrosine 191 bears the Phosphotyrosine mark. Lysine 204 carries the post-translational modification N6-acetyllysine. The chain crosses the membrane as a helical span at residues 214–233 (GVAPLWMRQIPYTMMKFACF). Residues 234–256 (ERTVEALYKFVVPKPRSECTKAE) are Mitochondrial intermembrane-facing. Residues 257-279 (QLVVTFVAGYIAGVFCAIVSHPA) form a helical membrane-spanning segment. At 280–309 (DSVVSVLNKEKGSTASQVLQRLGFRGVWKG) the chain is on the mitochondrial matrix side. The helical transmembrane segment at 310–328 (LFARIIMIGTLTALQWFIY) threads the bilayer. Over 329–357 (DSVKVYFRLPRPPPPEMPESLKKKLGLTE) the chain is Mitochondrial intermembrane.

Belongs to the mitochondrial carrier (TC 2.A.29) family. Interacts with PPIF; the interaction is impaired by CsA.

Its subcellular location is the mitochondrion inner membrane. The catalysed reaction is phosphate(in) + H(+)(in) = phosphate(out) + H(+)(out). Functionally, inorganic ion transporter that transports phosphate or copper ions across the mitochondrial inner membrane into the matrix compartment. Mediates proton-coupled symport of phosphate ions necessary for mitochondrial oxidative phosphorylation of ADP to ATP. Transports copper ions probably in the form of anionic copper(I) complexes to maintain mitochondrial matrix copper pool and to supply copper for cytochrome C oxidase complex assembly. May also play a role in regulation of the mitochondrial permeability transition pore (mPTP). This Mus musculus (Mouse) protein is Solute carrier family 25 member 3.